A 496-amino-acid chain; its full sequence is Apolipoprotein N-acyltransferase (496 aa).

6 helical membrane-spanning segments follow: residues 6–26, 50–70, 77–97, 114–134, 148–168, and 183–203; these read IICFLLGILSGLVFAPTFFIP, FGYLFGFGHFLSGMYWISIGV, FWWAIPFALFGLPIILAFFIS, LIFCLLWVLFEWIRSWICTGL, ILIQPLSITGIYGLSFIVIYI, and LKILLASSMLILTVMVIYGAM. The 245-residue stretch at 220 to 464 folds into the CN hydrolase domain; sequence VQPSIPQTAK…QGLIPQKLTT (245 aa). Catalysis depends on Glu-259, which acts as the Proton acceptor. Lys-322 is a catalytic residue. Cys-372 (nucleophile) is an active-site residue. The chain crosses the membrane as a helical span at residues 474–494; that stretch reads FAMLLPIVFILLIHYLLSLIF.

Belongs to the CN hydrolase family. Apolipoprotein N-acyltransferase subfamily.

It localises to the cell inner membrane. It carries out the reaction N-terminal S-1,2-diacyl-sn-glyceryl-L-cysteinyl-[lipoprotein] + a glycerophospholipid = N-acyl-S-1,2-diacyl-sn-glyceryl-L-cysteinyl-[lipoprotein] + a 2-acyl-sn-glycero-3-phospholipid + H(+). It participates in protein modification; lipoprotein biosynthesis (N-acyl transfer). Its function is as follows. Catalyzes the phospholipid dependent N-acylation of the N-terminal cysteine of apolipoprotein, the last step in lipoprotein maturation. This is Apolipoprotein N-acyltransferase from Rickettsia typhi (strain ATCC VR-144 / Wilmington).